A 181-amino-acid chain; its full sequence is Bradykinin potentiating and C-type natriuretic peptides (181 aa).

Residues 1–23 form the signal peptide; sequence MFVSRLAASGLLLLALLAVSLDG. Residues 24-27 constitute a propeptide that is removed on maturation; it reads KPLQ. Gln28 and Gln31 each carry pyrrolidone carboxylic acid. Positions 41–43 are excised as a propeptide; sequence LVV. Residue Gln44 is modified to Pyrrolidone carboxylic acid. A propeptide spanning residues 50–52 is cleaved from the precursor; it reads TQL. Gln53 is modified (pyrrolidone carboxylic acid). The propeptide occupies 59 to 159; that stretch reads AGGTTALREE…ARRLKGLAKK (101 aa). Residues 74 to 150 are disordered; sequence EAALDTPPAG…GGGCGGGGGA (77 aa). Residues 104–114 are compositionally biased toward low complexity; that stretch reads SKGASATSAAS. The segment covering 140 to 150 has biased composition (gly residues); the sequence is AGGGCGGGGGA. A disulfide bond links Cys165 and Cys181.

This sequence in the N-terminal section; belongs to the bradykinin-potentiating peptide family. In the C-terminal section; belongs to the natriuretic peptide family. As to expression, venom gland.

Its subcellular location is the secreted. Bradykinin-potentiating peptide both inhibits the activity of the angiotensin-converting enzyme (ACE) and enhances the action of bradykinin by inhibiting the peptidases that inactivate it. It acts as an indirect hypotensive agent. Synthetic Cdt1a, Cdt1b and the short hexapeptide Cdt3 are able to potentiate the hypotensive effect mediated by Bk on the blood pressure of anesthetized rats. In terms of biological role, has a vasorelaxant activity in rat aortic strips and a diuretic potency in anesthetized rats. May act by activating natriuretic receptors (NPR1 and/or NPR2). The chain is Bradykinin potentiating and C-type natriuretic peptides from Crotalus durissus terrificus (South American rattlesnake).